Consider the following 193-residue polypeptide: Putative zinc finger protein 726P1 (193 aa).

A C2H2-type 1; degenerate zinc finger spans residues 18-40; the sequence is YKCKKCGKTFNWSSILTNNKKIH. The C2H2-type 2; atypical zinc finger occupies 46–68; sequence YKCEECGKAFKQHSTLTTHKIIC. Residues 74-96 form a C2H2-type 3; degenerate zinc finger; it reads YRCEECGKAFCQPSTLTRYKRMH. A C2H2-type 4 zinc finger spans residues 102–124; that stretch reads YKCEECGKAFTQFSTLTKHKRIH. The segment at 130–152 adopts a C2H2-type 5; degenerate zinc-finger fold; that stretch reads YKCEESGKAFIWSSGLTEHRRVH. The C2H2-type 6 zinc-finger motif lies at 158–180; it reads YKCEECGKALIQFSTLTRHKRIH.

The polypeptide is Putative zinc finger protein 726P1 (ZNF726P1) (Homo sapiens (Human)).